We begin with the raw amino-acid sequence, 361 residues long: Zinc transporter ZIP13 (361 aa).

Topologically, residues 1-6 (MPGCPC) are lumenal. Residues 7–27 (PGCGMAGQRLLFLTVLALELL) form a helical membrane-spanning segment. Residues 28 to 68 (ERAGGSQPALRSLGAAAACRLDSKESESWGALLSGERLDTW) are Cytoplasmic-facing. Residues 69 to 89 (ICSLLGSLMVGLSGVFPLLVI) form a helical membrane-spanning segment. The Lumenal portion of the chain corresponds to 90-108 (PLEMGTMLQSEAGAWRLKQ). Residues 109–129 (LLSFALGGLLGNVFLHLLPEA) form a helical membrane-spanning segment. Topologically, residues 130–150 (WAYTCNISPGVEGQSLQRQQQ) are cytoplasmic. Residues 151-171 (LGLWVIAGFLTFLALEKMFLN) form a helical membrane-spanning segment. Residues 172–233 (CKEEDPSQAP…TIDNFTHGLA (62 aa)) are Lumenal-facing. The chain crosses the membrane as a helical span at residues 234–254 (VAASFLVSKKIGLLTTMAILL). The XEXPHE-motif signature appears at 255–260 (HEIPHE). Over 255 to 276 (HEIPHEVGDFAILLRAGFDRWT) the chain is Cytoplasmic. Residues 277–297 (AAKLQFSTALGGLLGACFAIC) traverse the membrane as a helical segment. The Lumenal portion of the chain corresponds to 298 to 307 (TQSPKGVEET). The helical transmembrane segment at 308–328 (VVWTLPFTSGGFLYVALVNVL) threads the bilayer. Residues 329–340 (PDLLEEDDPWHL) lie on the Cytoplasmic side of the membrane. The chain crosses the membrane as a helical span at residues 341-361 (NPPLPTGTPCSRCCCSAPVSW).

This sequence belongs to the ZIP transporter (TC 2.A.5) family. Homodimer.

Its subcellular location is the golgi apparatus membrane. The protein resides in the cytoplasmic vesicle membrane. It is found in the endoplasmic reticulum membrane. The catalysed reaction is Zn(2+)(in) = Zn(2+)(out). In terms of biological role, functions as a zinc transporter transporting Zn(2+) from the Golgi apparatus to the cytosol and thus influences the zinc level at least in areas of the cytosol. May regulate beige adipocyte differentiation. In Rattus norvegicus (Rat), this protein is Zinc transporter ZIP13.